The following is a 481-amino-acid chain: Beta-amyrin 28-monooxygenase (481 aa).

Residues phenylalanine 4–phenylalanine 24 traverse the membrane as a helical segment. Cysteine 428 is a binding site for heme.

The protein belongs to the cytochrome P450 family. It depends on heme as a cofactor.

It is found in the membrane. It carries out the reaction beta-amyrin + 3 reduced [NADPH--hemoprotein reductase] + 3 O2 = oleanolate + 3 oxidized [NADPH--hemoprotein reductase] + 4 H2O + 4 H(+). Its function is as follows. Catalyzes the oxidation of the methyl group to a carboxyl group at the C-28 position of beta-amyrin to form oleanolate. This Kalopanax septemlobus (Castor aralia) protein is Beta-amyrin 28-monooxygenase.